We begin with the raw amino-acid sequence, 139 residues long: 10 kDa chaperonin 2, chloroplastic (139 aa).

The transit peptide at 1–39 directs the protein to the chloroplast; it reads MASTFVCSLPNPFFAFPVKATTPSTANHTLLGSRRGCLR. A cpn-10 domain region spans residues 51 to 138; sequence KVVPQADRVL…CKESDLLALV (88 aa).

This sequence belongs to the GroES chaperonin family. In terms of tissue distribution, expressed in leaves and stems. Expressed at low levels in germinating seeds, seedlings, rosettes leaves, flowers and siliques.

Its subcellular location is the plastid. It localises to the chloroplast stroma. Its function is as follows. Functions as a co-chaperone for protein folding in chloroplasts. The protein is 10 kDa chaperonin 2, chloroplastic of Arabidopsis thaliana (Mouse-ear cress).